The primary structure comprises 583 residues: Complement factor I (583 aa).

Positions 1-18 (MKLLHVFLLFLCFHLSFC) are cleaved as a signal peptide. Intrachain disulfides connect Cys33–Cys255, Cys43–Cys54, Cys48–Cys59, Cys61–Cys93, Cys67–Cys86, Cys75–Cys106, Cys141–Cys181, Cys154–Cys214, Cys186–Cys196, Cys229–Cys247, Cys259–Cys271, Cys266–Cys284, Cys278–Cys293, Cys327–Cys453, Cys365–Cys381, and Cys373–Cys444. The Kazal-like domain maps to 55–108 (IEGTCICKLPYQCPKNGTTVCATNGRSFPTYCQQKSLECLRPGTKFLNNGTCTA). Residues Asn70, Asn103, Asn173, and Asn177 are each glycosylated (N-linked (GlcNAc...) asparagine). An SRCR domain is found at 114–212 (VSLKHGNTDS…TMGYQDLADV (99 aa)). 2 consecutive LDL-receptor class A domains span residues 213–257 (VCYT…LCCK) and 258–294 (ACQG…VGCE). 6 residues coordinate Ca(2+): Lys239, Asp242, Ile244, Asp246, Asp252, and Glu253. Residues Tyr276, Asn279, Glu281, Asp283, Asp289, and Glu290 each contribute to the Ca(2+) site. The Peptidase S1 domain occupies 340-574 (IVGGKRAQLG…YFDWISYHVG (235 aa)). Residues His380 and Asp429 each act as charge relay system in the active site. N-linked (GlcNAc...) asparagine glycosylation is found at Asn464 and Asn494. Cystine bridges form between Cys467-Cys531, Cys495-Cys510, and Cys521-Cys550. The active-site Charge relay system is the Ser525. Asn536 carries an N-linked (GlcNAc...) asparagine glycan.

It belongs to the peptidase S1 family. As to quaternary structure, heterodimer of a light and heavy chains; disulfide-linked. The fully processed and mature protein circulates as a zymogen, and is allosterically activated by substrate-induced remodeling of the active site. As to expression, plasma.

It is found in the secreted. Its subcellular location is the extracellular space. The catalysed reaction is Inactivates complement subcomponents C3b, iC3b and C4b by proteolytic cleavage.. Functionally, responsible for cleaving the alpha-chains of C4b and C3b in the presence of the cofactors C4-binding protein and factor H respectively. The chain is Complement factor I (CFI) from Pongo abelii (Sumatran orangutan).